The sequence spans 183 residues: MELVVGRVAKSHGIKGEIVVEVRTDEPEDRFAVGAVLRGHKPREQTVSTYTVEAARDHSGRLLLRLEGVSDRTAADALRGTLFVIDSAELEPSDDPDEFYDHELEGLSVRLADGTEVGTVIEVLHSAAGELLSIRRAGDQSGELLVPFVAAIVTSVSVADGVALIDPPEGLLDPDFGESADGK.

Residues 96 to 171 enclose the PRC barrel domain; sequence PDEFYDHELE…VALIDPPEGL (76 aa).

This sequence belongs to the RimM family. Binds ribosomal protein uS19.

The protein resides in the cytoplasm. In terms of biological role, an accessory protein needed during the final step in the assembly of 30S ribosomal subunit, possibly for assembly of the head region. Essential for efficient processing of 16S rRNA. May be needed both before and after RbfA during the maturation of 16S rRNA. It has affinity for free ribosomal 30S subunits but not for 70S ribosomes. In Rhodococcus jostii (strain RHA1), this protein is Ribosome maturation factor RimM.